We begin with the raw amino-acid sequence, 555 residues long: TBCC domain-containing protein 1 (555 aa).

Residues 302-433 (PEVSPMVIMS…LEDHMAQVGL (132 aa)) form the C-CAP/cofactor C-like domain.

The protein belongs to the TBCC family.

It is found in the cytoplasm. The protein localises to the cytoskeleton. It localises to the microtubule organizing center. Its subcellular location is the centrosome. The protein resides in the spindle pole. May play a role in the regulation of centrosome and Golgi apparatus positioning. The protein is TBCC domain-containing protein 1 (TBCCD1) of Gallus gallus (Chicken).